Consider the following 367-residue polypeptide: Putative F-box protein At3g21130 (367 aa).

Residues 4-50 (KRNTVYLSEDLIVEILSRVSAVSLARLRTTSKRWNALVKDERLAKKH) enclose the F-box domain.

This Arabidopsis thaliana (Mouse-ear cress) protein is Putative F-box protein At3g21130.